The primary structure comprises 487 residues: Zinc finger protein 345 (487 aa).

15 C2H2-type zinc fingers span residues 62 to 84, 90 to 112, 118 to 140, 146 to 168, 174 to 196, 202 to 224, 230 to 252, 258 to 280, 286 to 308, 314 to 336, 342 to 364, 370 to 392, 398 to 420, 426 to 448, and 454 to 476; these read LECK…QRIH, YECK…QRIH, YECN…QRIH, YECK…QIIH, YECK…HRIH, YECK…RRVH, YICN…QRIH, YVCK…QRIH, YECK…QRMH, YECK…QLIH, YECR…QRIH, and YECK…KKNH.

This sequence belongs to the krueppel C2H2-type zinc-finger protein family.

It is found in the nucleus. May be involved in transcriptional regulation. This is Zinc finger protein 345 (ZNF345) from Bos taurus (Bovine).